Reading from the N-terminus, the 79-residue chain is RNA-binding protein KhpA (79 aa).

The region spanning Thr32–Glu79 is the KH domain.

Belongs to the KhpA RNA-binding protein family.

The protein localises to the cytoplasm. In terms of biological role, a probable RNA-binding protein. This is RNA-binding protein KhpA from Aquifex aeolicus (strain VF5).